Here is a 192-residue protein sequence, read N- to C-terminus: Ubiquitin-conjugating enzyme E2 27 (192 aa).

In terms of domain architecture, UBC core spans 2 to 150 (IDFSRIQKEL…ARYWTETFAK (149 aa)). The active-site Glycyl thioester intermediate is the Cys-88. In terms of domain architecture, UBA spans 153–192 (SLEEKVKRLVEMGFGDAQVRSAIESSGGDENLALEKLCSA).

It belongs to the ubiquitin-conjugating enzyme family. In terms of tissue distribution, expressed in seeds, pistils, siliques, hypocotyls and leaves.

It catalyses the reaction S-ubiquitinyl-[E1 ubiquitin-activating enzyme]-L-cysteine + [E2 ubiquitin-conjugating enzyme]-L-cysteine = [E1 ubiquitin-activating enzyme]-L-cysteine + S-ubiquitinyl-[E2 ubiquitin-conjugating enzyme]-L-cysteine.. It participates in protein modification; protein ubiquitination. In terms of biological role, accepts the ubiquitin from the E1 complex and catalyzes its covalent attachment to other proteins. The chain is Ubiquitin-conjugating enzyme E2 27 (UBC27) from Arabidopsis thaliana (Mouse-ear cress).